Here is a 441-residue protein sequence, read N- to C-terminus: Histidine--tRNA ligase (441 aa).

This sequence belongs to the class-II aminoacyl-tRNA synthetase family. As to quaternary structure, homodimer.

It is found in the cytoplasm. It carries out the reaction tRNA(His) + L-histidine + ATP = L-histidyl-tRNA(His) + AMP + diphosphate + H(+). The protein is Histidine--tRNA ligase of Synechococcus sp. (strain WH7803).